The following is a 425-amino-acid chain: Tyrosine--tRNA ligase (425 aa).

Residue Y33 participates in L-tyrosine binding. The 'HIGH' region signature appears at 38–47; the sequence is PTADSLHLGN. Residues Y170 and Q174 each contribute to the L-tyrosine site. The 'KMSKS' region motif lies at 230-234; the sequence is KFGKS. ATP is bound at residue K233. Positions 356-422 constitute an S4 RNA-binding domain; sequence KKLIDLLVET…GKKNKMIIRL (67 aa).

It belongs to the class-I aminoacyl-tRNA synthetase family. TyrS type 1 subfamily. In terms of assembly, homodimer.

The protein resides in the cytoplasm. The enzyme catalyses tRNA(Tyr) + L-tyrosine + ATP = L-tyrosyl-tRNA(Tyr) + AMP + diphosphate + H(+). In terms of biological role, catalyzes the attachment of tyrosine to tRNA(Tyr) in a two-step reaction: tyrosine is first activated by ATP to form Tyr-AMP and then transferred to the acceptor end of tRNA(Tyr). The polypeptide is Tyrosine--tRNA ligase (Protochlamydia amoebophila (strain UWE25)).